We begin with the raw amino-acid sequence, 487 residues long: Melanopsin (487 aa).

The interval 1–37 (MNPPSGPRTQEPSCVATPASPSRWDGYRSSTSSLDQP) is disordered. At 1-67 (MNPPSGPRTQ…VDVPDHAHYT (67 aa)) the chain is on the extracellular side. Residues 68–88 (LGTVILLVGLTGILGNLMVIY) form a helical membrane-spanning segment. The Cytoplasmic segment spans residues 89–102 (TFCRSRGLRTPANM). The chain crosses the membrane as a helical span at residues 103–123 (FIINLAVSDFFMSFTQAPVFF). Over 124-139 (ASSLHKRWLFGEAGCE) the chain is Extracellular. A disulfide bridge connects residues Cys-138 and Cys-216. Residues 140-160 (FYAFCGALFGITSMITLMAIA) form a helical membrane-spanning segment. Topologically, residues 161–183 (LDRYLVITHPLATIGVVSKRRAA) are cytoplasmic. Residues 184-204 (LVLLGVWLYALAWSLPPFFGW) traverse the membrane as a helical segment. Residues 205-233 (SAYVPEGLLTSCSWDYMSFTPSVRAYTML) are Extracellular-facing. Residues 234-254 (LFCFVFFLPLLVIVYCYIFIF) traverse the membrane as a helical segment. Residues 255–291 (RAIRETGQALQTFRACEGGGRSPRQRQRLQREWKMAK) are Cytoplasmic-facing. Residues 292–312 (IELLVILLFVLSWAPYSIVAL) traverse the membrane as a helical segment. Over 313 to 327 (MAFAGYAHVLTPYMN) the chain is Extracellular. The helical transmembrane segment at 328-348 (SVPAVIAKASAIHNPIIYAIT) threads the bilayer. Lys-335 is subject to N6-(retinylidene)lysine. At 349–487 (HPKYRMAIAQ…LPLHPGWAFH (139 aa)) the chain is on the cytoplasmic side. The tract at residues 436-459 (CSQGLEDREAKAPVRPQGREAETP) is disordered. Residues 440 to 457 (LEDREAKAPVRPQGREAE) show a composition bias toward basic and acidic residues.

It belongs to the G-protein coupled receptor 1 family. Opsin subfamily. Eye. Expression is restricted within the ganglion cell layer.

The protein localises to the cell membrane. It is found in the cell projection. The protein resides in the axon. It localises to the dendrite. Its subcellular location is the perikaryon. In terms of biological role, photoreceptor that binds cis-retinaldehydes. Contributes to pupillar reflex, photoentrainment and other non-image forming responses to light. May be involved in the optokinetic visual tracking response. May be involved in the regulation of retinal hyaloid vessel growth and regression. This is Melanopsin (OPN4) from Felis catus (Cat).